A 219-amino-acid chain; its full sequence is Histone H1.11R (219 aa).

Composition is skewed to low complexity over residues 1–20 (MAET…AAKA) and 28–40 (AAGG…PAGP). Disordered stretches follow at residues 1–42 (MAET…GPSV) and 89–219 (LVSK…AKKK). The region spanning 38–111 (AGPSVTELIT…GASGSFRLSK (74 aa)) is the H15 domain. Composition is skewed to basic residues over residues 121–135 (PKKK…KAAA), 143–160 (KKPK…KAKK), 168–183 (KSVK…KKAV), and 192–219 (KAVK…AKKK).

The protein belongs to the histone H1/H5 family.

The protein resides in the nucleus. The protein localises to the chromosome. Its function is as follows. Histones H1 are necessary for the condensation of nucleosome chains into higher-order structures. This Gallus gallus (Chicken) protein is Histone H1.11R.